Consider the following 483-residue polypeptide: Protein EFFECTOR OF TRANSCRIPTION 2 (483 aa).

Positions 64–112 (SCPGLYELGVAVIGQEQCRKLEPDIVLASYLGQAESVRSRLQRYGRSGA) constitute a GIY-YIG domain. Cx9Cx9RCx2HK repeat units lie at residues 278 to 303 (CGVL…IEHK) and 338 to 363 (CGVI…EDHK). Residues 380–396 (EKTVKDEKPDPESHTES) are compositionally biased toward basic and acidic residues. The interval 380–399 (EKTVKDEKPDPESHTESIEE) is disordered. Cx9Cx9RCx2HK repeat units lie at residues 406 to 431 (CEAT…WQHK) and 453 to 478 (CGVK…EEHK).

In terms of tissue distribution, expressed in vascular tissues of stems, hypocotyls, leaves and flowers. Expressed in the vascular bundles of xylem in shoot parenchyma cells. Expressed in the remnant cytoplasm of differentiated fiber cells and in protoxylem element of parenchymal cells.

The protein localises to the cytoplasm. It localises to the nucleus. In terms of biological role, transcriptional regulator involved in the regulation of cell differentiation in meristems. Probably regulates the expression of various KNAT genes involved in the maintenance of the cells in an undifferentiated, merismastic state. Plays a role in the regulation of gibberellin 20 oxidase and the gibberellin-regulated protein GASA4. Localizes in the nucleus during the cellular differentiation state and may act via a single strand cutting domain. Transcriptional regulator required for the induction of dormancy during late seed development. Interacts genetically with FUS3 and may be component of the same regulatory pathway during embryogenesis. Binds both linear and supercoiled DNA without sequence preference. This chain is Protein EFFECTOR OF TRANSCRIPTION 2, found in Arabidopsis thaliana (Mouse-ear cress).